We begin with the raw amino-acid sequence, 273 residues long: Sanguinarine reductase (273 aa).

The Proton donor role is filled by serine 153. Residues 157 to 161 and lysine 175 contribute to the substrate site; that span reads CDPDH.

It belongs to the NAD(P)-dependent epimerase/dehydratase family. As to quaternary structure, monomer.

It carries out the reaction dihydrosanguinarine + NADP(+) = sanguinarine + NADPH. The enzyme catalyses dihydrosanguinarine + NAD(+) = sanguinarine + NADH. It catalyses the reaction dihydrochelirubine + NAD(+) = chelirubine + NADH. The catalysed reaction is dihydrochelirubine + NADP(+) = chelirubine + NADPH. Its activity is regulated as follows. Inhibited by iodoacetamide and irreversibly by its product, dihydrosanguinarine. Functionally, catalyzes the reduction of benzophenanthridines, preferentially sanguinarine, to the corresponding dihydroalkaloids. Involved in detoxifying the phytoalexins produced by plant itself. The sanguinarine produced by intact cells upon elicitation, after excretion and binding to cell wall elements, is rapidly reabsorbed and reduced to the less toxic dihydrosanguinarine. Can work with both NAD(P) or NAD as a hydrogen donor, but at low concentrations, the reaction velocity with NAD(P)H is threefold higher than with NADH. However, chelerythrine shows maximum conversion rates with NADH. The substrate preference is sanguinarine &gt; chelerythrine &gt; chelirubine, macarpine or 10-OH-chelerythrine. No activity with berberine or phenanthridine cations. The sequence is that of Sanguinarine reductase from Eschscholzia californica (California poppy).